The primary structure comprises 408 residues: Cytochrome bc1 complex Rieske iron-sulfur subunit (408 aa).

3 consecutive transmembrane segments (helical) span residues 56–76, 98–118, and 162–182; these read VTFW…TYIF, MLGI…VLYV, and LIMG…IAPM. The Rieske domain occupies 293 to 390; it reads HGPRNAVMLI…ITVDEEGYLI (98 aa). [2Fe-2S] cluster-binding residues include cysteine 333, histidine 335, cysteine 352, and histidine 355. Cysteine 338 and cysteine 354 are joined by a disulfide.

It belongs to the Rieske iron-sulfur protein family. The cytochrome bc1 complex is composed of a cytochrome b (QcrB), the Rieske iron-sulfur protein (QcrA) and a diheme cytochrome c (QcrC) subunit. The bc1 complex forms a supercomplex with cytochrome c oxidase (cytochrome aa3). [2Fe-2S] cluster serves as cofactor.

It localises to the cell membrane. Its function is as follows. Iron-sulfur subunit of the cytochrome bc1 complex, an essential component of the respiratory electron transport chain required for ATP synthesis. The bc1 complex catalyzes the oxidation of menaquinol and the reduction of cytochrome c in the respiratory chain. The bc1 complex operates through a Q-cycle mechanism that couples electron transfer to generation of the proton gradient that drives ATP synthesis. In Corynebacterium glutamicum (strain ATCC 13032 / DSM 20300 / JCM 1318 / BCRC 11384 / CCUG 27702 / LMG 3730 / NBRC 12168 / NCIMB 10025 / NRRL B-2784 / 534), this protein is Cytochrome bc1 complex Rieske iron-sulfur subunit (qcrA).